The sequence spans 125 residues: Probable 4-amino-4-deoxy-L-arabinose-phosphoundecaprenol flippase subunit ArnF (125 aa).

Residues 1–2 (MG) lie on the Cytoplasmic side of the membrane. A helical membrane pass occupies residues 3–23 (VMWGLISVAIASLAQLSLGFA). Residues 24-33 (MMRLPSIAHP) are Periplasmic-facing. Residues 34–54 (LAFISGLGALNAATLALFAGL) form a helical membrane-spanning segment. Topologically, residues 55–76 (AGYLVSVFCWHKTLHTLALSKA) are cytoplasmic. The helical transmembrane segment at 77 to 97 (YALLSLSYVLVWVASMLLPGL) threads the bilayer. Residues 98 to 100 (QGA) lie on the Periplasmic side of the membrane. The chain crosses the membrane as a helical span at residues 101–121 (FSLKAMLGVLCIMAGVMLIFL). Residues 122–125 (PARS) lie on the Cytoplasmic side of the membrane.

The protein belongs to the ArnF family. As to quaternary structure, heterodimer of ArnE and ArnF.

The protein localises to the cell inner membrane. It functions in the pathway bacterial outer membrane biogenesis; lipopolysaccharide biosynthesis. Its function is as follows. Translocates 4-amino-4-deoxy-L-arabinose-phosphoundecaprenol (alpha-L-Ara4N-phosphoundecaprenol) from the cytoplasmic to the periplasmic side of the inner membrane. The polypeptide is Probable 4-amino-4-deoxy-L-arabinose-phosphoundecaprenol flippase subunit ArnF (Salmonella agona (strain SL483)).